The chain runs to 480 residues: ATP synthase subunit beta (480 aa).

158–165 (GGAGVGKT) contributes to the ATP binding site.

The protein belongs to the ATPase alpha/beta chains family. F-type ATPases have 2 components, CF(1) - the catalytic core - and CF(0) - the membrane proton channel. CF(1) has five subunits: alpha(3), beta(3), gamma(1), delta(1), epsilon(1). CF(0) has three main subunits: a(1), b(2) and c(9-12). The alpha and beta chains form an alternating ring which encloses part of the gamma chain. CF(1) is attached to CF(0) by a central stalk formed by the gamma and epsilon chains, while a peripheral stalk is formed by the delta and b chains.

The protein resides in the cell inner membrane. It carries out the reaction ATP + H2O + 4 H(+)(in) = ADP + phosphate + 5 H(+)(out). Its function is as follows. Produces ATP from ADP in the presence of a proton gradient across the membrane. The catalytic sites are hosted primarily by the beta subunits. In Koribacter versatilis (strain Ellin345), this protein is ATP synthase subunit beta.